We begin with the raw amino-acid sequence, 140 residues long: Large ribosomal subunit protein uL16 (140 aa).

It belongs to the universal ribosomal protein uL16 family. In terms of assembly, part of the 50S ribosomal subunit.

Binds 23S rRNA and is also seen to make contacts with the A and possibly P site tRNAs. This chain is Large ribosomal subunit protein uL16, found in Phytoplasma australiense.